The sequence spans 153 residues: UPF0266 membrane protein SG1324 (153 aa).

The next 3 membrane-spanning stretches (helical) occupy residues 6–26, 46–66, and 68–88; these read IGLVIMIVIALLFAVFDEFIV, LDGLIFIVLLLILLYKNITTD, and KVMTSTLILFLGLMVIYLAYI.

Belongs to the UPF0266 family.

It localises to the cell inner membrane. This is UPF0266 membrane protein SG1324 from Sodalis glossinidius (strain morsitans).